A 561-amino-acid polypeptide reads, in one-letter code: DNA ligase B (561 aa).

Lys-125 functions as the N6-AMP-lysine intermediate in the catalytic mechanism.

This sequence belongs to the NAD-dependent DNA ligase family. LigB subfamily.

It carries out the reaction NAD(+) + (deoxyribonucleotide)n-3'-hydroxyl + 5'-phospho-(deoxyribonucleotide)m = (deoxyribonucleotide)n+m + AMP + beta-nicotinamide D-nucleotide.. Catalyzes the formation of phosphodiester linkages between 5'-phosphoryl and 3'-hydroxyl groups in double-stranded DNA using NAD as a coenzyme and as the energy source for the reaction. The sequence is that of DNA ligase B from Salmonella paratyphi B (strain ATCC BAA-1250 / SPB7).